A 335-amino-acid chain; its full sequence is Galactosylgalactosylxylosylprotein 3-beta-glucuronosyltransferase 3 (335 aa).

Over 1-7 (MKLKLKN) the chain is Cytoplasmic. Residues 8–28 (VFLAYFLVSIAGLLYALVQLG) form a helical; Signal-anchor for type II membrane protein membrane-spanning segment. The Lumenal segment spans residues 29 to 335 (QPCDCLPPLR…GQGSDPAIEV (307 aa)). Asp-196 contacts Mn(2+). Glu-281 acts as the Proton acceptor in catalysis. Asn-300 is a glycosylation site (N-linked (GlcNAc...) asparagine). The span at 312 to 322 (EKPKMKQEEQL) shows a compositional bias: basic and acidic residues. Positions 312-335 (EKPKMKQEEQLQRQGQGSDPAIEV) are disordered.

It belongs to the glycosyltransferase 43 family. As to quaternary structure, homodimer; disulfide-linked. Interacts with PXYLP1; the interaction increases the 2-phosphoxylose phosphatase activity of PXYLP1 during completion of linkage region formation in a B3GAT3-mediated manner. The cofactor is Mn(2+). N-glycosylated. In terms of tissue distribution, liver, brain and heart. Moderate expression seen in lung, skeletal muscle, kidney and testis.

It localises to the golgi apparatus membrane. Its subcellular location is the golgi apparatus. It is found in the cis-Golgi network. The catalysed reaction is 3-O-(beta-D-galactosyl-(1-&gt;3)-beta-D-galactosyl-(1-&gt;4)-beta-D-xylosyl)-L-seryl-[protein] + UDP-alpha-D-glucuronate = 3-O-(beta-D-GlcA-(1-&gt;3)-beta-D-Gal-(1-&gt;3)-beta-D-Gal-(1-&gt;4)-beta-D-Xyl)-L-seryl-[protein] + UDP + H(+). Its pathway is protein modification; protein glycosylation. Its function is as follows. Glycosaminoglycans biosynthesis. Involved in forming the linkage tetrasaccharide present in heparan sulfate and chondroitin sulfate. Transfers a glucuronic acid moiety from the uridine diphosphate-glucuronic acid (UDP-GlcUA) to the common linkage region trisaccharide Gal-beta-1,3-Gal-beta-1,4-Xyl covalently bound to a Ser residue at the glycosaminylglycan attachment site of proteoglycans. Can also play a role in the biosynthesis of l2/HNK-1 carbohydrate epitope on glycoproteins. Highest activity seen with Gal-beta-1,3-Gal-beta-O-R (where R=naphthalenemethanol or benzyl alcohol). Stimulates 2-phosphoxylose phosphatase activity of PXYLP1 in presence of uridine diphosphate-glucuronic acid (UDP-GlcUA) during completion of linkage region formation. This is Galactosylgalactosylxylosylprotein 3-beta-glucuronosyltransferase 3 (B3GAT3) from Cricetulus griseus (Chinese hamster).